We begin with the raw amino-acid sequence, 219 residues long: Histone H1.01 (219 aa).

Composition is skewed to low complexity over residues 1–19 and 27–39; these read MSETAPAAAPDAPAPGAKA and AAGGAKARKPAGP. 2 disordered regions span residues 1–40 and 94–219; these read MSETAPAAAPDAPAPGAKAAAKKPKKAAGGAKARKPAGPS and LVQT…AKKK. Position 2 is an N-acetylserine (Ser2). Residues 37 to 110 enclose the H15 domain; it reads AGPSVTELIT…GASGSFRLNK (74 aa). 4 stretches are compositionally biased toward basic residues: residues 119 to 134, 142 to 159, 167 to 185, and 192 to 219; these read APRKRATAAKPKKPAA, KKPKKAAAVKKSPKKAKK, KAAKSPKKAAKAGRPKKAA, and KAVKPKAAKPKATKPKAAKAKKTAAKKK.

This sequence belongs to the histone H1/H5 family.

Its subcellular location is the nucleus. The protein resides in the chromosome. In terms of biological role, histones H1 are necessary for the condensation of nucleosome chains into higher-order structures. The protein is Histone H1.01 of Gallus gallus (Chicken).